Reading from the N-terminus, the 225-residue chain is Phosphoserine phosphatase (225 aa).

Residue methionine 1 is modified to N-acetylmethionine. Catalysis depends on aspartate 20, which acts as the Nucleophile. Aspartate 20 and aspartate 22 together coordinate Mg(2+). Residue 20-22 participates in L-serine binding; the sequence is DVD. Residue aspartate 22 is the Proton donor of the active site. Methionine 52 contacts O-phospho-L-serine. Phosphate is bound at residue glycine 53. Residues 109–111 and lysine 158 each bind L-serine; that span reads SGG. O-phospho-L-serine contacts are provided by residues 109–111 and lysine 158; that span reads SGG. Residue aspartate 179 coordinates Mg(2+). Threonine 182 serves as a coordination point for O-phospho-L-serine. Threonine 182 serves as a coordination point for phosphate.

Belongs to the HAD-like hydrolase superfamily. SerB family. In terms of assembly, homodimer. Mg(2+) is required as a cofactor.

Its subcellular location is the cytoplasm. The protein resides in the cytosol. It catalyses the reaction O-phospho-L-serine + H2O = L-serine + phosphate. It carries out the reaction O-phospho-D-serine + H2O = D-serine + phosphate. It participates in amino-acid biosynthesis; L-serine biosynthesis; L-serine from 3-phospho-D-glycerate: step 3/3. Its function is as follows. Catalyzes the last irreversible step in the biosynthesis of L-serine from carbohydrates, the dephosphorylation of O-phospho-L-serine to L-serine. L-serine can then be used in protein synthesis, to produce other amino acids, in nucleotide metabolism or in glutathione synthesis, or can be racemized to D-serine, a neuromodulator. May also act on O-phospho-D-serine. This is Phosphoserine phosphatase from Mus musculus (Mouse).